A 325-amino-acid polypeptide reads, in one-letter code: Inactive S-adenosylmethionine decarboxylase prozyme (325 aa).

The protein belongs to the eukaryotic AdoMetDC family. Forms a heterodimer with S-adenosylmethionine decarboxylase AdoMetDC; heterodimerization is required to activate AdoMetDC.

It participates in amine and polyamine biosynthesis; S-adenosylmethioninamine biosynthesis; S-adenosylmethioninamine from S-adenosyl-L-methionine: step 1/1. Functionally, probably has no catalytic activity due to the loss of several residues required for processing and catalysis. Forms a complex with S-adenosylmethionine decarboxylase AdoMetDC which is essential to activate AdoMetDC. Required for the biosynthesis of the polyamine spermidine. Required for growth and survival during the bloodstream life cycle stage. The protein is Inactive S-adenosylmethionine decarboxylase prozyme of Trypanosoma brucei brucei.